We begin with the raw amino-acid sequence, 174 residues long: Repair DNA polymerase X (174 aa).

The segment at 42 to 51 (REEKMLNDVD) is involved in ssDNA binding. Asp-49 and Asp-51 together coordinate Mg(2+). A disulfide bridge links Cys-81 with Cys-86. Asp-100 lines the Mg(2+) pocket.

It belongs to the DNA polymerase type-X family. It depends on Mg(2+) as a cofactor.

The protein localises to the virion. The enzyme catalyses DNA(n) + a 2'-deoxyribonucleoside 5'-triphosphate = DNA(n+1) + diphosphate. In terms of biological role, error-prone polymerase lacking a proofreading 3'-5' exonuclease which catalyzes the gap-filling reaction during the DNA repair process. Specifically binds intermediates in the single-nucleotide base-excision repair process. Also catalyzes DNA polymerization with low nucleotide-insertion fidelity. Probably acts as a strategic DNA mutase, which gives rise to a rapid emergence of variants. Generates mismatched G-G pairs, in that case, the polymerase first binds the deoxynucleotide followed by mismatch formation. Together with the viral DNA ligase, fills the single nucleotide gaps generated by the AP endonuclease. Binds DNA with high affinity via the helix alphaE. In African swine fever virus (isolate Tick/Malawi/Lil 20-1/1983) (ASFV), this protein is Repair DNA polymerase X.